A 334-amino-acid chain; its full sequence is B3 domain-containing protein LOC_Os12g40090 (334 aa).

A DNA-binding region (TF-B3 1) is located at residues 5 to 102 (RIRFFRLMTG…SFDVLIFDAS (98 aa)). Positions 142–178 (TSTPSVLIGSPHKASTSKKLSGKTKTNPRKEPEDPNC) are disordered. The segment covering 154–166 (KASTSKKLSGKTK) has biased composition (low complexity). Residues 227–326 (FVVVLQTAHV…TMTVHVIGKA (100 aa)) constitute a DNA-binding region (TF-B3 2).

It is found in the nucleus. The chain is B3 domain-containing protein LOC_Os12g40090 from Oryza sativa subsp. japonica (Rice).